We begin with the raw amino-acid sequence, 157 residues long: Protein UXT (157 aa).

It belongs to the UXT family. As to quaternary structure, homohexamer. Component of the PAQosome complex which is responsible for the biogenesis of several protein complexes and which consists of R2TP complex members RUVBL1, RUVBL2, RPAP3 and PIH1D1, URI complex members PFDN2, PFDN6, PDRG1, UXT and URI1 as well as ASDURF, POLR2E and DNAAF10/WDR92. Interacts with LRPPRC. Interacts with androgen receptor AR (via N-terminus). Interacts with estrogen receptor ESR1; the interaction relocalizes ESR1 from the nucleus to the cytoplasm. In the nucleus, interacts specifically with RELA (via RHD domain) and forms a dynamic complex with NF-kappa-B and is recruited to the NF-kappa-B enhanceosome upon stimulation. Interacts with MECOM. Interacts with URI1. Part of complex I composed of TNF-alpha receptor TNFRSF1A, TRADD, TRAF2 and RIPK1 formed in response to TNF-alpha stimulation. Within the complex, interacts (via TPQE motif) with TRAF2; the interaction prevents the recruitment of FADD and CASP8/caspase 8 to complex I. In terms of processing, ubiquitinated by E3 ubiquitin-protein ligase complex containing FBXO7; leading to proteasomal degradation. Ubiquitous. Expressed in prostate epithelial cells. Expressed in mammary epithelial cells. Highest levels in the heart, skeletal muscle, pancreas, kidney, liver, adrenal gland, peripheral blood leukocytes, lymph node, prostate, and thyroid and the lowest levels in bladder and uterus. Overexpressed in a number of tumor tissues.

Its subcellular location is the cytoplasm. It localises to the nucleus. The protein resides in the cytoskeleton. The protein localises to the microtubule organizing center. It is found in the centrosome. Its subcellular location is the spindle pole. Functionally, involved in gene transcription regulation. Acts in concert with the corepressor URI1 to regulate androgen receptor AR-mediated transcription. Together with URI1, associates with chromatin to the NKX3-1 promoter region. Negatively regulates the transcriptional activity of the estrogen receptor ESR1 by inducing its translocation into the cytoplasm. May act as nuclear chaperone that facilitates the formation of the NF-kappa-B enhanceosome and thus positively regulates NF-kappa-B transcription activity. Potential component of mitochondrial-associated LRPPRC, a multidomain organizer that potentially integrates mitochondria and the microtubular cytoskeleton with chromosome remodeling. Increasing concentrations of UXT contributes to progressive aggregation of mitochondria and cell death potentially through its association with LRPPRC. Suppresses cell transformation and it might mediate this function by interaction and inhibition of the biological activity of cell proliferation and survival stimulatory factors like MECOM. Plays a role in protecting cells against TNF-alpha-induced apoptosis by preventing the recruitment of FADD and caspase 8 to the apoptotic complex I, composed of TRADD, TRAF2 and RIPK1/RIP. The sequence is that of Protein UXT (UXT) from Homo sapiens (Human).